The chain runs to 1343 residues: DNA-directed RNA polymerase subunit beta (1343 aa).

The protein belongs to the RNA polymerase beta chain family. The RNAP catalytic core consists of 2 alpha, 1 beta, 1 beta' and 1 omega subunit. When a sigma factor is associated with the core the holoenzyme is formed, which can initiate transcription.

The enzyme catalyses RNA(n) + a ribonucleoside 5'-triphosphate = RNA(n+1) + diphosphate. DNA-dependent RNA polymerase catalyzes the transcription of DNA into RNA using the four ribonucleoside triphosphates as substrates. This Shewanella loihica (strain ATCC BAA-1088 / PV-4) protein is DNA-directed RNA polymerase subunit beta.